A 369-amino-acid polypeptide reads, in one-letter code: Glycolate oxidase (369 aa).

Met1 carries the N-acetylmethionine modification. Residues Met1–Asp359 form the FMN hydroxy acid dehydrogenase domain. Tyr24 is a glyoxylate binding site. Residues Pro77–Ala79, Ser106, Gln127–Tyr129, and Thr155 contribute to the FMN site. Tyr129 is a glyoxylate binding site. Glyoxylate is bound at residue Arg164. Residues Lys230 and Ser252 each coordinate FMN. His254 and Arg257 together coordinate glyoxylate. His254 (proton acceptor) is an active-site residue. FMN-binding positions include Asp285–Arg289 and Gly308–Arg309. Positions Ala367–Leu369 match the Microbody targeting signal motif.

The protein belongs to the FMN-dependent alpha-hydroxy acid dehydrogenase family. In terms of assembly, homotetramer. Requires FMN as cofactor.

The protein localises to the peroxisome. The enzyme catalyses glycolate + O2 = glyoxylate + H2O2. The catalysed reaction is a (2S)-2-hydroxycarboxylate + O2 = a 2-oxocarboxylate + H2O2. Its pathway is photosynthesis; photorespiration; glycine from 2-phosphoglycolate: step 2/3. In terms of biological role, catalyzes the oxidation of glycolate to glyoxylate, with a reduction of O2 to H2O2. Is a key enzyme in photorespiration in green plants. To a lesser extent, is also able to use L-lactate and 2-hydroxbyutanoate as substrate in vitro, but shows almost no activity with L-mandelate. This Spinacia oleracea (Spinach) protein is Glycolate oxidase.